The chain runs to 354 residues: Inactive ADP-ribosyltransferase ARH2 (354 aa).

S27 carries the post-translational modification Phosphoserine.

This sequence belongs to the ADP-ribosylglycohydrolase family.

It is found in the cytoplasm. The protein resides in the myofibril. Its subcellular location is the sarcomere. In terms of biological role, required for myofibril assembly and outgrowth of the cardiac chambers in the developing heart. Appears to be catalytically inactive, showing no activity against O-acetyl-ADP-ribose. The chain is Inactive ADP-ribosyltransferase ARH2 (ADPRHL1) from Homo sapiens (Human).